The primary structure comprises 156 residues: Eosinophil cationic-type ribonuclease 3 (156 aa).

The signal sequence occupies residues 1 to 25; sequence MGPKLLESRLCLLLLLRLVLMLASC. H38 (proton acceptor) is an active-site residue. N-linked (GlcNAc...) asparagine glycosylation is present at N41. 4 cysteine pairs are disulfide-bonded: C47–C106, C61–C119, C79–C134, and C86–C94. 62–66 contacts substrate; that stretch reads KGLNT. N-linked (GlcNAc...) asparagine glycosylation is found at N89, N96, and N107. H151 (proton donor) is an active-site residue.

Belongs to the pancreatic ribonuclease family.

This is Eosinophil cationic-type ribonuclease 3 (Ear3) from Mus musculus (Mouse).